The following is a 393-amino-acid chain: S-adenosylmethionine synthase (393 aa).

Glutamate 9 is a Mg(2+) binding site. Histidine 15 contributes to the ATP binding site. K(+) is bound at residue glutamate 43. L-methionine is bound by residues glutamate 56 and glutamine 99. ATP-binding positions include 167–169, 235–238, aspartate 246, 252–253, alanine 269, lysine 273, and lysine 277; these read DGK, SGRF, and RK. Residue aspartate 246 participates in L-methionine binding. An L-methionine-binding site is contributed by lysine 277.

The protein belongs to the AdoMet synthase family. As to quaternary structure, homotetramer. Mn(2+) is required as a cofactor. It depends on Mg(2+) as a cofactor. Requires Co(2+) as cofactor. The cofactor is K(+).

The protein resides in the cytoplasm. The enzyme catalyses L-methionine + ATP + H2O = S-adenosyl-L-methionine + phosphate + diphosphate. Its pathway is amino-acid biosynthesis; S-adenosyl-L-methionine biosynthesis; S-adenosyl-L-methionine from L-methionine: step 1/1. In terms of biological role, catalyzes the formation of S-adenosylmethionine from methionine and ATP. The reaction comprises two steps that are both catalyzed by the same enzyme: formation of S-adenosylmethionine (AdoMet) and triphosphate, and subsequent hydrolysis of the triphosphate. The polypeptide is S-adenosylmethionine synthase (SAMS) (Brassica rapa subsp. pekinensis (Chinese cabbage)).